The primary structure comprises 146 residues: Protein STIG1 (146 aa).

The N-terminal stretch at Met1–Ser23 is a signal peptide. 3 N-linked (GlcNAc...) asparagine glycosylation sites follow: Asn31, Asn61, and Asn84.

It belongs to the STIG1 family. In terms of processing, glycosylated. Expressed exclusively in the stigmatic secretory zone.

Its subcellular location is the secreted. Functionally, involved in the temporal regulation of the exudate secretion onto the stigma. This Nicotiana tabacum (Common tobacco) protein is Protein STIG1.